A 196-amino-acid chain; its full sequence is Putative archaetidylserine decarboxylase proenzyme (196 aa).

The Schiff-base intermediate with substrate; via pyruvic acid role is filled by Ser164. Ser164 carries the pyruvic acid (Ser); by autocatalysis modification.

This sequence belongs to the phosphatidylserine decarboxylase family. PSD-A subfamily. In terms of assembly, heterodimer of a large membrane-associated beta subunit and a small pyruvoyl-containing alpha subunit. The cofactor is pyruvate. In terms of processing, is synthesized initially as an inactive proenzyme. Formation of the active enzyme involves a self-maturation process in which the active site pyruvoyl group is generated from an internal serine residue via an autocatalytic post-translational modification. Two non-identical subunits are generated from the proenzyme in this reaction, and the pyruvate is formed at the N-terminus of the alpha chain, which is derived from the carboxyl end of the proenzyme. The post-translation cleavage follows an unusual pathway, termed non-hydrolytic serinolysis, in which the side chain hydroxyl group of the serine supplies its oxygen atom to form the C-terminus of the beta chain, while the remainder of the serine residue undergoes an oxidative deamination to produce ammonia and the pyruvoyl prosthetic group on the alpha chain.

Its subcellular location is the cell membrane. It carries out the reaction archaetidylserine + H(+) = archaetidylethanolamine + CO2. In terms of biological role, catalyzes the formation of archaetidylethanolamine (PtdEtn) from archaetidylserine (PtdSer). This Halobacterium salinarum (strain ATCC 700922 / JCM 11081 / NRC-1) (Halobacterium halobium) protein is Putative archaetidylserine decarboxylase proenzyme.